The chain runs to 254 residues: Hydroxyacylglutathione hydrolase (254 aa).

Residues histidine 52, histidine 54, aspartate 56, histidine 57, histidine 109, aspartate 126, and histidine 164 each contribute to the Zn(2+) site.

This sequence belongs to the metallo-beta-lactamase superfamily. Glyoxalase II family. Monomer. Zn(2+) serves as cofactor.

It carries out the reaction an S-(2-hydroxyacyl)glutathione + H2O = a 2-hydroxy carboxylate + glutathione + H(+). It participates in secondary metabolite metabolism; methylglyoxal degradation; (R)-lactate from methylglyoxal: step 2/2. Thiolesterase that catalyzes the hydrolysis of S-D-lactoyl-glutathione to form glutathione and D-lactic acid. This chain is Hydroxyacylglutathione hydrolase, found in Stenotrophomonas maltophilia (strain R551-3).